A 353-amino-acid chain; its full sequence is Phosphoribosylformylglycinamidine cyclo-ligase (353 aa).

The protein belongs to the AIR synthase family.

The protein resides in the cytoplasm. It carries out the reaction 2-formamido-N(1)-(5-O-phospho-beta-D-ribosyl)acetamidine + ATP = 5-amino-1-(5-phospho-beta-D-ribosyl)imidazole + ADP + phosphate + H(+). It participates in purine metabolism; IMP biosynthesis via de novo pathway; 5-amino-1-(5-phospho-D-ribosyl)imidazole from N(2)-formyl-N(1)-(5-phospho-D-ribosyl)glycinamide: step 2/2. This Ralstonia nicotianae (strain ATCC BAA-1114 / GMI1000) (Ralstonia solanacearum) protein is Phosphoribosylformylglycinamidine cyclo-ligase.